The sequence spans 273 residues: Dermonecrotic toxin LspaSicTox-alphaIA1iii (273 aa).

His5 is an active-site residue. Mg(2+) contacts are provided by Glu25 and Asp27. His41 (nucleophile) is an active-site residue. Intrachain disulfides connect Cys45–Cys51 and Cys47–Cys190. Position 85 (Asp85) interacts with Mg(2+).

It belongs to the arthropod phospholipase D family. Class II subfamily. The cofactor is Mg(2+). In terms of tissue distribution, expressed by the venom gland.

The protein resides in the secreted. The enzyme catalyses an N-(acyl)-sphingosylphosphocholine = an N-(acyl)-sphingosyl-1,3-cyclic phosphate + choline. The catalysed reaction is an N-(acyl)-sphingosylphosphoethanolamine = an N-(acyl)-sphingosyl-1,3-cyclic phosphate + ethanolamine. It catalyses the reaction a 1-acyl-sn-glycero-3-phosphocholine = a 1-acyl-sn-glycero-2,3-cyclic phosphate + choline. It carries out the reaction a 1-acyl-sn-glycero-3-phosphoethanolamine = a 1-acyl-sn-glycero-2,3-cyclic phosphate + ethanolamine. Dermonecrotic toxins cleave the phosphodiester linkage between the phosphate and headgroup of certain phospholipids (sphingolipid and lysolipid substrates), forming an alcohol (often choline) and a cyclic phosphate. This toxin acts on sphingomyelin (SM). It may also act on ceramide phosphoethanolamine (CPE), lysophosphatidylcholine (LPC) and lysophosphatidylethanolamine (LPE), but not on lysophosphatidylserine (LPS), and lysophosphatidylglycerol (LPG). It acts by transphosphatidylation, releasing exclusively cyclic phosphate products as second products. Induces dermonecrosis, hemolysis, increased vascular permeability, edema, inflammatory response, and platelet aggregation. This is Dermonecrotic toxin LspaSicTox-alphaIA1iii from Loxosceles spadicea (Recluse spider).